Consider the following 120-residue polypeptide: Small ribosomal subunit protein uS12 (120 aa).

Residue Asp-88 is modified to 3-methylthioaspartic acid.

Belongs to the universal ribosomal protein uS12 family. Part of the 30S ribosomal subunit. Contacts proteins S8 and S17. May interact with IF1 in the 30S initiation complex.

With S4 and S5 plays an important role in translational accuracy. Functionally, interacts with and stabilizes bases of the 16S rRNA that are involved in tRNA selection in the A site and with the mRNA backbone. Located at the interface of the 30S and 50S subunits, it traverses the body of the 30S subunit contacting proteins on the other side and probably holding the rRNA structure together. The combined cluster of proteins S8, S12 and S17 appears to hold together the shoulder and platform of the 30S subunit. This Carsonella ruddii (strain PV) protein is Small ribosomal subunit protein uS12.